The primary structure comprises 202 residues: Translation initiation factor IF-3 (202 aa).

Residues 178–202 (TPRKTPLLKKESETTEPKKALRSIN) are disordered. Basic and acidic residues predominate over residues 185–196 (LKKESETTEPKK).

This sequence belongs to the IF-3 family. In terms of assembly, monomer.

The protein resides in the cytoplasm. In terms of biological role, IF-3 binds to the 30S ribosomal subunit and shifts the equilibrium between 70S ribosomes and their 50S and 30S subunits in favor of the free subunits, thus enhancing the availability of 30S subunits on which protein synthesis initiation begins. The sequence is that of Translation initiation factor IF-3 from Prochlorococcus marinus (strain NATL1A).